Consider the following 277-residue polypeptide: Carbonyl reductase [NADPH] 3 (277 aa).

At S2 the chain carries N-acetylserine. Residues 10–34 (VTGA…GDVV), 38–42 (RDEAR), 63–64 (DI), and N90 contribute to the NADP(+) site. A Phosphoserine modification is found at S30. S140 serves as a coordination point for substrate. Y194 functions as the Proton acceptor in the catalytic mechanism. 194–198 (YGVSK) serves as a coordination point for NADP(+).

This sequence belongs to the short-chain dehydrogenases/reductases (SDR) family.

The protein resides in the cytoplasm. It catalyses the reaction a secondary alcohol + NADP(+) = a ketone + NADPH + H(+). It carries out the reaction a quinone + NADPH + H(+) = a quinol + NADP(+). Catalyzes the NADPH-dependent reduction of carbonyl compounds to their corresponding alcohols. Has low NADPH-dependent oxidoreductase activity. Acts on several orthoquinones, as well as on non-quinone compounds, such as isatin or on the anticancer drug oracin. Best substrates for CBR3 is 1,2- naphthoquinone, hence could play a role in protection against cytotoxicity of exogenous quinones. Exerts activity toward ortho-quinones but not paraquinones. No endogenous substrate for CBR3 except isatin has been identified. This chain is Carbonyl reductase [NADPH] 3 (Cbr3), found in Mus musculus (Mouse).